The primary structure comprises 151 residues: 1,4-dihydroxy-2-naphthoyl-CoA hydrolase (151 aa).

Residue aspartate 19 is part of the active site.

The protein belongs to the 4-hydroxybenzoyl-CoA thioesterase family. DHNA-CoA hydrolase subfamily.

The catalysed reaction is 1,4-dihydroxy-2-naphthoyl-CoA + H2O = 1,4-dihydroxy-2-naphthoate + CoA + H(+). It functions in the pathway cofactor biosynthesis; phylloquinone biosynthesis. The protein operates within quinol/quinone metabolism; 1,4-dihydroxy-2-naphthoate biosynthesis; 1,4-dihydroxy-2-naphthoate from chorismate: step 7/7. Catalyzes the hydrolysis of 1,4-dihydroxy-2-naphthoyl-CoA (DHNA-CoA) to 1,4-dihydroxy-2-naphthoate (DHNA), a reaction involved in phylloquinone (vitamin K1) biosynthesis. This chain is 1,4-dihydroxy-2-naphthoyl-CoA hydrolase, found in Prochlorococcus marinus (strain MIT 9313).